A 209-amino-acid chain; its full sequence is Uracil phosphoribosyltransferase (209 aa).

Residues Arg-79, Arg-104, and 131-139 each bind 5-phospho-alpha-D-ribose 1-diphosphate; that span reads DPMLATGGS. Uracil-binding positions include Ile-194 and 199-201; that span reads GDA. Asp-200 lines the 5-phospho-alpha-D-ribose 1-diphosphate pocket.

This sequence belongs to the UPRTase family. Mg(2+) is required as a cofactor.

The catalysed reaction is UMP + diphosphate = 5-phospho-alpha-D-ribose 1-diphosphate + uracil. It functions in the pathway pyrimidine metabolism; UMP biosynthesis via salvage pathway; UMP from uracil: step 1/1. Its activity is regulated as follows. Allosterically activated by GTP. In terms of biological role, catalyzes the conversion of uracil and 5-phospho-alpha-D-ribose 1-diphosphate (PRPP) to UMP and diphosphate. The protein is Uracil phosphoribosyltransferase of Geobacillus kaustophilus (strain HTA426).